Reading from the N-terminus, the 188-residue chain is MKVIVGLGNPGSKYKETKHNIGFITLDEIAYRQNVSFNNSNFEADIAEFFIGTEKVLLVKPLTFMNESGRSVGPLLTYFGVDEEDLIVIYDDLDLEIGKIRLRQKGSAGGHNGIKSLIAHLGTNVFPRIKIGIGRPSKNDTVIHHVLSTFPKETHEEMLLAVKKAADAALYACEGHTFVETMNQFNGK.

Y14 is a tRNA binding site. Residue H19 is the Proton acceptor of the active site. Residues F64, N66, and N112 each contribute to the tRNA site.

It belongs to the PTH family. As to quaternary structure, monomer.

It localises to the cytoplasm. It catalyses the reaction an N-acyl-L-alpha-aminoacyl-tRNA + H2O = an N-acyl-L-amino acid + a tRNA + H(+). Hydrolyzes ribosome-free peptidyl-tRNAs (with 1 or more amino acids incorporated), which drop off the ribosome during protein synthesis, or as a result of ribosome stalling. Functionally, catalyzes the release of premature peptidyl moieties from peptidyl-tRNA molecules trapped in stalled 50S ribosomal subunits, and thus maintains levels of free tRNAs and 50S ribosomes. This chain is Peptidyl-tRNA hydrolase, found in Enterococcus faecalis (strain ATCC 700802 / V583).